Here is a 478-residue protein sequence, read N- to C-terminus: Zinc finger C3HC-type protein 1-like (478 aa).

The C3HC-type zinc finger occupies 93-147; the sequence is CAKYGWSNIECDMLKCSSCNAYLCASLQPVLDFSKYKQRCVELQEALRKAHEKFC. The disordered stretch occupies residues 285–389; that stretch reads LSAPNTPVSP…SSSSDTSPRG (105 aa). Polar residues predominate over residues 351-363; that stretch reads SMGQGESSGLSNE. The segment covering 377-388 has biased composition (low complexity); it reads LCSSSSSDTSPR.

Phosphorylated. May also be weakly phosphorylated on Tyr residues.

The protein resides in the nucleus. Its subcellular location is the nucleus envelope. Its function is as follows. Required for proper positioning of a substantial amount of TPR at the nuclear basket (NB) through interaction with TPR. This chain is Zinc finger C3HC-type protein 1-like (zc3hc1), found in Xenopus tropicalis (Western clawed frog).